Reading from the N-terminus, the 225-residue chain is Probable polyketide biosynthesis zinc-dependent hydrolase BaeB (225 aa).

The Zn(2+) site is built by histidine 62, histidine 64, aspartate 66, histidine 67, histidine 123, aspartate 140, and histidine 181.

It belongs to the metallo-beta-lactamase superfamily. It depends on Zn(2+) as a cofactor.

It localises to the cytoplasm. The protein operates within antibiotic biosynthesis; bacillaene biosynthesis. Probably involved in some intermediate steps for the synthesis of the antibiotic polyketide bacillaene which is involved in secondary metabolism. This chain is Probable polyketide biosynthesis zinc-dependent hydrolase BaeB (baeB), found in Bacillus velezensis (strain DSM 23117 / BGSC 10A6 / LMG 26770 / FZB42) (Bacillus amyloliquefaciens subsp. plantarum).